The primary structure comprises 519 residues: Cytochrome P450 4A11 (519 aa).

Positions 1–4 (MSVS) are excised as a propeptide. E321 serves as a coordination point for heme. Residue S440 is modified to Phosphoserine. C457 is a heme binding site.

The protein belongs to the cytochrome P450 family. Requires heme as cofactor. As to expression, expressed in liver. Expressed in S2 and S3 segments of proximal tubules in cortex and outer medulla of kidney.

It localises to the endoplasmic reticulum membrane. Its subcellular location is the microsome membrane. It carries out the reaction an organic molecule + reduced [NADPH--hemoprotein reductase] + O2 = an alcohol + oxidized [NADPH--hemoprotein reductase] + H2O + H(+). The catalysed reaction is an omega-methyl-long-chain fatty acid + reduced [NADPH--hemoprotein reductase] + O2 = an omega-hydroxy-long-chain fatty acid + oxidized [NADPH--hemoprotein reductase] + H2O + H(+). It catalyses the reaction dodecanoate + reduced [NADPH--hemoprotein reductase] + O2 = 12-hydroxydodecanoate + oxidized [NADPH--hemoprotein reductase] + H2O + H(+). The enzyme catalyses tetradecanoate + reduced [NADPH--hemoprotein reductase] + O2 = 14-hydroxytetradecanoate + oxidized [NADPH--hemoprotein reductase] + H2O + H(+). It carries out the reaction hexadecanoate + reduced [NADPH--hemoprotein reductase] + O2 = 16-hydroxyhexadecanoate + oxidized [NADPH--hemoprotein reductase] + H2O + H(+). The catalysed reaction is (9Z)-octadecenoate + reduced [NADPH--hemoprotein reductase] + O2 = 18-hydroxy-(9Z)-octadecenoate + oxidized [NADPH--hemoprotein reductase] + H2O + H(+). It catalyses the reaction (5Z,8Z,11Z,14Z)-eicosatetraenoate + reduced [NADPH--hemoprotein reductase] + O2 = 20-hydroxy-(5Z,8Z,11Z,14Z)-eicosatetraenoate + oxidized [NADPH--hemoprotein reductase] + H2O + H(+). The enzyme catalyses 22-hydroxydocosanoate + reduced [NADPH--hemoprotein reductase] + O2 = 22-oxodocosanoate + oxidized [NADPH--hemoprotein reductase] + 2 H2O + H(+). It carries out the reaction 22-oxodocosanoate + reduced [NADPH--hemoprotein reductase] + O2 = docosanedioate + oxidized [NADPH--hemoprotein reductase] + H2O + 2 H(+). The catalysed reaction is (9R,10S)-epoxy-octadecanoate + reduced [NADPH--hemoprotein reductase] + O2 = 18-hydroxy-(9R,10S)-epoxy-octadecanoate + oxidized [NADPH--hemoprotein reductase] + H2O + H(+). It catalyses the reaction 3-hydroxyhexadecanoate + reduced [NADPH--hemoprotein reductase] + O2 = 3,16-dihydroxyhexadecanoate + oxidized [NADPH--hemoprotein reductase] + H2O + H(+). Its pathway is lipid metabolism; arachidonate metabolism. It functions in the pathway lipid metabolism; oxylipin biosynthesis. With respect to regulation, activated by cytochrome b5. Functionally, a cytochrome P450 monooxygenase involved in the metabolism of fatty acids and their oxygenated derivatives (oxylipins). Mechanistically, uses molecular oxygen inserting one oxygen atom into a substrate, and reducing the second into a water molecule, with two electrons provided by NADPH via cytochrome P450 reductase (CPR; NADPH-ferrihemoprotein reductase). Catalyzes predominantly the oxidation of the terminal carbon (omega-oxidation) of saturated and unsaturated fatty acids, the catalytic efficiency decreasing in the following order: dodecanoic &gt; tetradecanoic &gt; (9Z)-octadecenoic &gt; (9Z,12Z)-octadecadienoic &gt; hexadecanoic acid. Acts as a major omega-hydroxylase for dodecanoic (lauric) acid in liver. Participates in omega-hydroxylation of (5Z,8Z,11Z,14Z)-eicosatetraenoic acid (arachidonate) to 20-hydroxyeicosatetraenoic acid (20-HETE), a signaling molecule acting both as vasoconstrictive and natriuretic with overall effect on arterial blood pressure. Can also catalyze the oxidation of the penultimate carbon (omega-1 oxidation) of fatty acids with lower efficiency. May contribute to the degradation of saturated very long-chain fatty acids (VLCFAs) such as docosanoic acid, by catalyzing successive omega-oxidations to the corresponding dicarboxylic acid, thereby initiating chain shortening. Omega-hydroxylates (9R,10S)-epoxy-octadecanoate stereoisomer. Plays a minor role in omega-oxidation of long-chain 3-hydroxy fatty acids. Has little activity toward prostaglandins A1 and E1. This is Cytochrome P450 4A11 from Homo sapiens (Human).